A 1321-amino-acid chain; its full sequence is Bile salt export pump (1321 aa).

Over 1 to 62 (MSDSVILRSV…FSSWTDIWLM (62 aa)) the chain is Cytoplasmic. An ABC transmembrane type-1 1 domain is found at 62–385 (MCMGSLCACI…ASPCLEAFAA (324 aa)). Residues 63-83 (CMGSLCACIHGIAQPGVLLIF) traverse the membrane as a helical segment. Over 84 to 147 (GTMTDVFIDY…MIRFAGYYAG (64 aa)) the chain is Extracellular. Residues Asn-109, Asn-116, Asn-122, and Asn-125 are each glycosylated (N-linked (GlcNAc...) asparagine). A helical transmembrane segment spans residues 148–168 (IGIAVLTTGYIQICFWGIAAA). The Cytoplasmic segment spans residues 169–215 (HQIQKMRKSYFRKIMRMGIGWVDCNSVGKLNTPFSVDFNKINDSSAD). A helical membrane pass occupies residues 216–236 (QLAIFIQGMTSPIFGFLVGFS). At 237–240 (QWWK) the chain is on the extracellular side. Residues 241–261 (LTLVIISVSPLIGLGAAIIGL) traverse the membrane as a helical segment. Residues 262–319 (SVSKFTDYELKAYAKAGSVADEVISSMRTVAAFGGEKKEVERYEKNLVFAQRWGIRKG) are Cytoplasmic-facing. A helical transmembrane segment spans residues 320 to 340 (IVMGFFTGYMWCLIFFCYALA). Over 341–353 (FWYGSKLVLEEGE) the chain is Extracellular. A helical membrane pass occupies residues 354 to 374 (YSPGALVQIFLSVIIGALNLG). Residues 375–755 (NASPCLEAFA…KLNAPEWPYM (381 aa)) lie on the Cytoplasmic side of the membrane. The ABC transporter 1 domain maps to 420–656 (IEFHNVTFHY…KGVYFALVTL (237 aa)). 455–462 (GPSGAGKS) lines the ATP pocket. Residue Thr-586 is modified to Phosphothreonine. A Phosphoserine modification is found at Ser-587. Residues 651-672 (FALVTLQSQRNQGDQEENEKDA) form an interaction with HAX1 region. Residues 659–735 (QRNQGDQEEN…KDKDLPAQED (77 aa)) form a disordered region. Acidic residues predominate over residues 664 to 677 (DQEENEKDATEDDI). Residues Ser-690, Ser-701, and Ser-704 each carry the phosphoserine modification. The segment covering 714 to 731 (VEDHKSTHEEDRKDKDLP) has biased composition (basic and acidic residues). One can recognise an ABC transmembrane type-1 2 domain in the interval 755-1043 (MLLGSMGAAV…ASSYTPSYAK (289 aa)). The helical transmembrane segment at 756-776 (LLGSMGAAVNGAVTPLYAFLF) threads the bilayer. The Extracellular segment spans residues 777-794 (SQILGTFSLPDKEEQRSQ). Residues 795–815 (INGICLLFVTLGCVSFFTQFL) form a helical membrane-spanning segment. The Cytoplasmic segment spans residues 816-869 (QGYTFAKSGELLTKRLRKFGFRAMLGQDIGWFDDLRNSPGALTTRLATDASQVQ). Helical transmembrane passes span 870 to 890 (GATG…TVAM) and 891 to 911 (IIAF…FPFL). Residues 912–979 (ALSGALQTKM…PYKMAIKKAN (68 aa)) lie on the Cytoplasmic side of the membrane. The chain crosses the membrane as a helical span at residues 980–1000 (VYGLCFGFSQCITFIANSASY). Topologically, residues 1001 to 1011 (RYGGYLISNEG) are extracellular. The chain crosses the membrane as a helical span at residues 1012-1032 (LHFSYVFRVISAVVLSATALG). Residues 1033–1321 (RASSYTPSYA…KLVTTGSPIS (289 aa)) lie on the Cytoplasmic side of the membrane. The ABC transporter 2 domain maps to 1078–1316 (IDFVDCKFTY…KGAYYKLVTT (239 aa)). 1113-1120 (GSSGCGKS) is an ATP binding site. Residues Ser-1214 and Ser-1321 each carry the phosphoserine modification.

It belongs to the ABC transporter superfamily. ABCB family. Multidrug resistance exporter (TC 3.A.1.201) subfamily. In terms of assembly, interacts with HAX1. Interacts with the adapter protein complex 2 (AP-2) throught AP2A2 or AP2A1; this interaction regulates cell membrane expression of ABCB11 through its internalization in a clathrin-dependent manner and its subsequent degradation. Post-translationally, N-glycosylated. In terms of processing, ubiquitinated; short-chain ubiquitination regulates cell-Surface expression of ABCB11. In terms of tissue distribution, expressed predominantly, if not exclusively in the liver, where it was further localized to the canalicular microvilli and to subcanalicular vesicles of the hepatocytes by in situ.

It localises to the apical cell membrane. It is found in the recycling endosome membrane. The protein resides in the endosome. Its subcellular location is the cell membrane. The catalysed reaction is cholate(in) + ATP + H2O = cholate(out) + ADP + phosphate + H(+). It carries out the reaction taurocholate(in) + ATP + H2O = taurocholate(out) + ADP + phosphate + H(+). The enzyme catalyses glycocholate(in) + ATP + H2O = glycocholate(out) + ADP + phosphate + H(+). It catalyses the reaction glycochenodeoxycholate(in) + ATP + H2O = glycochenodeoxycholate(out) + ADP + phosphate + H(+). The catalysed reaction is taurochenodeoxycholate(in) + ATP + H2O = taurochenodeoxycholate(out) + ADP + phosphate + H(+). It carries out the reaction glycoursodeoxycholate(in) + ATP + H2O = glycoursodeoxycholate(out) + ADP + phosphate + H(+). The enzyme catalyses tauroursodeoxycholate(in) + ATP + H2O = tauroursodeoxycholate(out) + ADP + phosphate + H(+). It catalyses the reaction taurodeoxycholate(in) + ATP + H2O = taurodeoxycholate(out) + ADP + phosphate + H(+). The catalysed reaction is taurolithocholate 3-sulfate(in) + ATP + H2O = taurolithocholate 3-sulfate(out) + ADP + phosphate + H(+). It carries out the reaction pravastatin(in) + ATP + H2O = pravastatin(out) + ADP + phosphate + H(+). With respect to regulation, the uptake of taurocholate is inhibited by taurolithocholate sulfate with an IC(50) of 9 uM. Pravastatin competitively inhibits the transport of taurocholic acid. Cyclosporin A, glibenclamide, rifampicin and troglitazonestrongly competitively inhibit the transport activity of taurocholate. The canalicular transport activity of taurocholate is strongly dependent on canalicular membrane cholesterol content. The uptake of taurocholate is increased by short- and medium-chain fatty acids. Cholesterol increases transport capacity of taurocholate without affecting the affinity for the substrate. Functionally, catalyzes the transport of the major hydrophobic bile salts, such as taurine and glycine-conjugated cholic acid across the canalicular membrane of hepatocytes in an ATP-dependent manner, therefore participates in hepatic bile acid homeostasis and consequently to lipid homeostasis through regulation of biliary lipid secretion in a bile salts dependent manner. Transports taurine-conjugated bile salts more rapidly than glycine-conjugated bile salts. Also transports non-bile acid compounds, such as pravastatin and fexofenadine in an ATP-dependent manner and may be involved in their biliary excretion. This Oryctolagus cuniculus (Rabbit) protein is Bile salt export pump.